Reading from the N-terminus, the 100-residue chain is Small ribosomal subunit protein uS14 (100 aa).

It belongs to the universal ribosomal protein uS14 family. Part of the 30S ribosomal subunit. Contacts proteins S3 and S10.

Binds 16S rRNA, required for the assembly of 30S particles and may also be responsible for determining the conformation of the 16S rRNA at the A site. This is Small ribosomal subunit protein uS14 from Microcystis aeruginosa (strain NIES-843 / IAM M-2473).